The following is a 285-amino-acid chain: ATP phosphoribosyltransferase (285 aa).

The protein belongs to the ATP phosphoribosyltransferase family. Long subfamily. The cofactor is Mg(2+).

It localises to the cytoplasm. The catalysed reaction is 1-(5-phospho-beta-D-ribosyl)-ATP + diphosphate = 5-phospho-alpha-D-ribose 1-diphosphate + ATP. The protein operates within amino-acid biosynthesis; L-histidine biosynthesis; L-histidine from 5-phospho-alpha-D-ribose 1-diphosphate: step 1/9. With respect to regulation, feedback inhibited by histidine. Functionally, catalyzes the condensation of ATP and 5-phosphoribose 1-diphosphate to form N'-(5'-phosphoribosyl)-ATP (PR-ATP). Has a crucial role in the pathway because the rate of histidine biosynthesis seems to be controlled primarily by regulation of HisG enzymatic activity. This chain is ATP phosphoribosyltransferase, found in Streptomyces coelicolor (strain ATCC BAA-471 / A3(2) / M145).